The primary structure comprises 532 residues: FRIGIDA-like protein 4a (532 aa).

The tract at residues 406–432 (KTEKRKPAAVPANKRTRASYNGPMPPA) is disordered.

Belongs to the Frigida family. Expressed in leaves, shoot apex, flowers and during seed development.

This is FRIGIDA-like protein 4a (FRL4A) from Arabidopsis thaliana (Mouse-ear cress).